We begin with the raw amino-acid sequence, 158 residues long: Cyclic pyranopterin monophosphate synthase (158 aa).

Substrate is bound by residues L76–H78 and M114–E115. The active site involves D129.

The protein belongs to the MoaC family. As to quaternary structure, homohexamer; trimer of dimers.

It carries out the reaction (8S)-3',8-cyclo-7,8-dihydroguanosine 5'-triphosphate = cyclic pyranopterin phosphate + diphosphate. It functions in the pathway cofactor biosynthesis; molybdopterin biosynthesis. In terms of biological role, catalyzes the conversion of (8S)-3',8-cyclo-7,8-dihydroguanosine 5'-triphosphate to cyclic pyranopterin monophosphate (cPMP). In Shewanella sediminis (strain HAW-EB3), this protein is Cyclic pyranopterin monophosphate synthase.